The primary structure comprises 475 residues: MSPKTETKASVGFKAGVKDYRLTYYTPEYQTKDTDILAAFRVTPQPGVPAEEAGAAVAAESSTGTWTTVWTDGLTSLDRYKGRCYDIEPVPGEENQFIAYVAYPLDLFEEGSVTNLFTSIVGNVFGFKALRALRLEDLRIPPAYSKTFQGPPHGIQVERDKLNKYGRPLLGCTIKPKLGLSAKNYGRAVYECLRGGLDFTKDDENVNSQPFMRWRDRFVFCAEAINKAQAETGEIKGHYLNATAGTCEEMIKRAVFARELGVPIVMHDYLTGGFTANTSLAHYCRDNGLLLHIHRAMHAVIDRQRNHGMHFRVLAKALRMSGGDHIHAGTVVGKLEGERDVTLGFVDLLRDDFIEKDRSRGIYFTQDWVSMPGVMPVASGGIHVWHMPALTEIFGDDSVLQFGGGTLGHPWGNAPGAVANRVALEACVQARNEGRDLAREGNEVIREASKWSPELAAACEIWKEIKFEFDVIDRL.

The propeptide occupies 1–2 (MS). P3 is modified (N-acetylproline). K14 carries the N6,N6,N6-trimethyllysine modification. Residues N123 and T173 each contribute to the substrate site. The active-site Proton acceptor is the K175. K177 serves as a coordination point for substrate. Residues K201, D203, and E204 each coordinate Mg(2+). An N6-carboxylysine modification is found at K201. The Proton acceptor role is filled by H294. 3 residues coordinate substrate: R295, H327, and S379.

Belongs to the RuBisCO large chain family. Type I subfamily. In terms of assembly, heterohexadecamer of 8 large chains and 8 small chains; disulfide-linked. The disulfide link is formed within the large subunit homodimers. The cofactor is Mg(2+). In terms of processing, the disulfide bond which can form in the large chain dimeric partners within the hexadecamer appears to be associated with oxidative stress and protein turnover.

It is found in the plastid. It localises to the chloroplast. The enzyme catalyses 2 (2R)-3-phosphoglycerate + 2 H(+) = D-ribulose 1,5-bisphosphate + CO2 + H2O. The catalysed reaction is D-ribulose 1,5-bisphosphate + O2 = 2-phosphoglycolate + (2R)-3-phosphoglycerate + 2 H(+). RuBisCO catalyzes two reactions: the carboxylation of D-ribulose 1,5-bisphosphate, the primary event in carbon dioxide fixation, as well as the oxidative fragmentation of the pentose substrate in the photorespiration process. Both reactions occur simultaneously and in competition at the same active site. The sequence is that of Ribulose bisphosphate carboxylase large chain from Pinus edulis (Pinyon pine).